We begin with the raw amino-acid sequence, 427 residues long: MTAIVDIIGREILDSRGNPTVEVDVVLEDGALGRAAVPSGASTGAHEAVELRDGDASRYLGKGVGMAVDAVNGEIFDAIGGYEAEDQAHIDAALLALDGTPNKGRLGANAILGVSLAVAKAAAESKGLPLYRYVGGVNARVLPVPMMNIINGGAHADNPIDFQEFMILPAGAPSFAEGLRWGAEIFHTLKKGLKDAGHNTNVGDEGGFAPNLASAEAALEFVLKAIEKAGFKPGEDVYLGLDCASTEFFKNGVYNYEGEGTVRDIEAQVAYLAELVAKYPIVTIEDGMAEDDWVGWKLLTDTVGSKCQLVGDDLFVTNVERLSRGIKDGVGNSILVKVNQIGSLTETLDAVEMAHKAGYRAVMSHRSGETEDATIADLAVATNCGQIKTGSLARSDRTAKYNQLLRIEQELGDSARYAGKAALKALA.

Residue Gln-163 participates in (2R)-2-phosphoglycerate binding. Catalysis depends on Glu-205, which acts as the Proton donor. 3 residues coordinate Mg(2+): Asp-242, Glu-285, and Asp-312. The (2R)-2-phosphoglycerate site is built by Lys-337, Arg-366, Ser-367, and Lys-388. Lys-337 serves as the catalytic Proton acceptor.

This sequence belongs to the enolase family. Mg(2+) is required as a cofactor.

It is found in the cytoplasm. The protein resides in the secreted. The protein localises to the cell surface. It catalyses the reaction (2R)-2-phosphoglycerate = phosphoenolpyruvate + H2O. It functions in the pathway carbohydrate degradation; glycolysis; pyruvate from D-glyceraldehyde 3-phosphate: step 4/5. Catalyzes the reversible conversion of 2-phosphoglycerate (2-PG) into phosphoenolpyruvate (PEP). It is essential for the degradation of carbohydrates via glycolysis. This Xanthobacter autotrophicus (strain ATCC BAA-1158 / Py2) protein is Enolase.